A 245-amino-acid polypeptide reads, in one-letter code: Zinc finger protein 575 (245 aa).

The disordered stretch occupies residues 1–67 (MLERGAESAA…PPQRPHRCPD (67 aa)). Positions 36–49 (PSQSAPGPTASAGS) are enriched in low complexity. The span at 52–63 (RPRRRPPPQRPH) shows a compositional bias: basic residues. 6 consecutive C2H2-type zinc fingers follow at residues 63–85 (HRCPDCDKAFSYPSKLATHRLAH), 91–113 (HPCPDCPKAFSYPSKLAAHRLTH), 119–141 (HPCPHCPKSFGHRSKLAAHLWTH), 147–169 (YPCPDCPKSFCYPSKLAAHRHTH), 177–199 (YPCPHCPKAFSFPSKLAAHRLCH), and 213–240 (HRCSSCGQAFGQRRLLLLHQRSHHQVEH).

Belongs to the krueppel C2H2-type zinc-finger protein family.

Its subcellular location is the nucleus. Functionally, may be involved in transcriptional regulation. This chain is Zinc finger protein 575 (ZNF575), found in Homo sapiens (Human).